We begin with the raw amino-acid sequence, 508 residues long: 2,3-bisphosphoglycerate-independent phosphoglycerate mutase (508 aa).

Mn(2+) is bound by residues Asp-14 and Ser-64. Catalysis depends on Ser-64, which acts as the Phosphoserine intermediate. Residues His-125, 155 to 156 (RD), Arg-187, Arg-193, 259 to 262 (RADR), and Lys-332 contribute to the substrate site. Mn(2+)-binding residues include Asp-399, His-403, Asp-440, His-441, and His-459.

The protein belongs to the BPG-independent phosphoglycerate mutase family. In terms of assembly, monomer. Mn(2+) is required as a cofactor.

The catalysed reaction is (2R)-2-phosphoglycerate = (2R)-3-phosphoglycerate. The protein operates within carbohydrate degradation; glycolysis; pyruvate from D-glyceraldehyde 3-phosphate: step 3/5. Functionally, catalyzes the interconversion of 2-phosphoglycerate and 3-phosphoglycerate. The protein is 2,3-bisphosphoglycerate-independent phosphoglycerate mutase of Pseudomonas fluorescens (strain Pf0-1).